A 464-amino-acid polypeptide reads, in one-letter code: Glutamate decarboxylase beta (464 aa).

Residue lysine 275 is modified to N6-(pyridoxal phosphate)lysine.

This sequence belongs to the group II decarboxylase family. Pyridoxal 5'-phosphate serves as cofactor.

It carries out the reaction L-glutamate + H(+) = 4-aminobutanoate + CO2. Functionally, converts internalized glutamate to GABA and increases the internal pH. Involved in glutamate-dependent acid resistance in gastric fluid. This Listeria monocytogenes serovar 1/2a (strain ATCC BAA-679 / EGD-e) protein is Glutamate decarboxylase beta (gadB).